The primary structure comprises 869 residues: Iron-sulfur cluster assembly SufBD family protein ML0593 (869 aa).

Positions 344–477 (LLGLWLGDGH…VRQLAIGCGL (134 aa)) constitute a DOD-type homing endonuclease domain.

This sequence belongs to the iron-sulfur cluster assembly SufBD family. Post-translationally, this protein undergoes a protein self splicing that involves a post-translational excision of the intervening region (intein) followed by peptide ligation.

The sequence is that of Iron-sulfur cluster assembly SufBD family protein ML0593 from Mycobacterium leprae (strain TN).